A 280-amino-acid polypeptide reads, in one-letter code: MAESHLDPSKLATGPAGFGAAAGQRPLAPLNAKIEVKNLNFFYNQFHALKNINLSIPEGKVTAFIGPSGCGKSTLLRTFNKMYALYPEQRAEGEIVMDGENLLQSKLDISLLRARIGMVFQKPTPFPMSIYDNIAFGVKMFERLTRSEMDDRVEWALTKAALWNEVKDKLSQSGYGLSGGQQQRLCIARGIAIRPEVLLLDEPCSALDPISTGRIEELIAELKSDYTVVIVTHNMQQAARCSDYTAYMYLGELIEFGETEKIFIKPARKETEDYITGRFG.

An ABC transporter domain is found at 34–275 (IEVKNLNFFY…PARKETEDYI (242 aa)). 66-73 (GPSGCGKS) contributes to the ATP binding site.

This sequence belongs to the ABC transporter superfamily. Phosphate importer (TC 3.A.1.7) family. As to quaternary structure, the complex is composed of two ATP-binding proteins (PstB), two transmembrane proteins (PstC and PstA) and a solute-binding protein (PstS).

The protein localises to the cell inner membrane. The catalysed reaction is phosphate(out) + ATP + H2O = ADP + 2 phosphate(in) + H(+). Its function is as follows. Part of the ABC transporter complex PstSACB involved in phosphate import. Responsible for energy coupling to the transport system. This chain is Phosphate import ATP-binding protein PstB, found in Burkholderia mallei (strain ATCC 23344).